The primary structure comprises 421 residues: Serine--tRNA ligase (421 aa).

Position 232–234 (232–234) interacts with L-serine; sequence TAE. 262-264 lines the ATP pocket; the sequence is RSE. E285 provides a ligand contact to L-serine. An ATP-binding site is contributed by 349–352; sequence EVSS. S384 lines the L-serine pocket.

This sequence belongs to the class-II aminoacyl-tRNA synthetase family. Type-1 seryl-tRNA synthetase subfamily. As to quaternary structure, homodimer. The tRNA molecule binds across the dimer.

The protein resides in the cytoplasm. The enzyme catalyses tRNA(Ser) + L-serine + ATP = L-seryl-tRNA(Ser) + AMP + diphosphate + H(+). It carries out the reaction tRNA(Sec) + L-serine + ATP = L-seryl-tRNA(Sec) + AMP + diphosphate + H(+). The protein operates within aminoacyl-tRNA biosynthesis; selenocysteinyl-tRNA(Sec) biosynthesis; L-seryl-tRNA(Sec) from L-serine and tRNA(Sec): step 1/1. Its function is as follows. Catalyzes the attachment of serine to tRNA(Ser). Is also able to aminoacylate tRNA(Sec) with serine, to form the misacylated tRNA L-seryl-tRNA(Sec), which will be further converted into selenocysteinyl-tRNA(Sec). The protein is Serine--tRNA ligase of Mycoplasma mobile (strain ATCC 43663 / 163K / NCTC 11711) (Mesomycoplasma mobile).